Here is a 450-residue protein sequence, read N- to C-terminus: Protein tailless (450 aa).

The segment at residues 31-108 is a DNA-binding region (nuclear receptor); that stretch reads HVPCKVCRDH…VGMNKDAVQH (78 aa). 2 consecutive NR C4-type zinc fingers follow at residues 34–54 and 70–96; these read CKVCRDHSSGKHYGIYACDGC and CKSQKQGLCVVDKTHRNQCRACRLRKC. Positions 187-448 constitute an NR LBD domain; sequence VPRVPHHPVH…RLISDMYSQR (262 aa).

Belongs to the nuclear hormone receptor family. NR2 subfamily. Monomer.

It is found in the nucleus. Its function is as follows. Orphan receptor that binds DNA as a monomer to hormone response elements (HRE) containing an extended core motif half-site sequence 5'-AAGTCA-3' in which the 5' flanking nucleotides participate in determining receptor specificity. This receptor binds to the consensus sequence [AG][AG]AAGTCAA. Plays a key role in the establishment of non-metameric domains at the anterior and posterior poles of the embryo. It may also play a role in the nervous system. The maternal terminal pathway activates the tll gene in the termini; TLL activity then represses segmentation and activates terminal-specific genes in these domains. Involved in the regulation of early eye development. In the embryonic visual system anlage drives cells to optic lobe as opposed to Bolwig's organ fate. The sequence is that of Protein tailless (tll) from Drosophila virilis (Fruit fly).